The chain runs to 247 residues: Peptidyl-prolyl cis-trans isomerase FKBP17-2, chloroplastic (247 aa).

Residues 1 to 79 (MANLFTATAP…SSLTRRFGIG (79 aa)) constitute a chloroplast transit peptide. Residues 26-64 (QCYASSSNPPEPESSSPPPPPPPPQPLASQQKRKKNVET) are disordered. Pro residues predominate over residues 34–51 (PPEPESSSPPPPPPPPQP). Residues 141–243 (GDLVVIDLKG…EYIVEIDRVS (103 aa)) form the PPIase FKBP-type domain.

The protein belongs to the FKBP-type PPIase family.

The protein localises to the plastid. It localises to the chloroplast thylakoid lumen. The catalysed reaction is [protein]-peptidylproline (omega=180) = [protein]-peptidylproline (omega=0). Functionally, PPIases accelerate the folding of proteins. It catalyzes the cis-trans isomerization of proline imidic peptide bonds in oligopeptides. The polypeptide is Peptidyl-prolyl cis-trans isomerase FKBP17-2, chloroplastic (FKBP17-2) (Arabidopsis thaliana (Mouse-ear cress)).